The following is a 1086-amino-acid chain: MLEADLVSKMLRAVLQSHKNGIVLPRLQGEYRSLTGDWIPFKQLGYPTLEAYLRSVPAVVRIEASRSGEIVCYAVACTETARIAQLVARQRTSKRKIGRQINCQMRVKKAMPFFLEGKPKATLRQPGFASDYSISRKPNSALLRDRGSALGVKADVDMPPYPDTPVQRHASMSANSRFSPKSSLPASFQTHISRACPTEVNDNLNQTVEKPNITPPASYTNKMDEVQNRIKEILDKHNNGIWISKLPHFYKEFYKEDLNQGVLQQFEHWPHICTVEKPCGGGQDSLLYPARREQPLKSDQDPEKELPPPPPAPKQEVPSQGSPAVMPDVKEKVAELLGKYSSGLWASALPKAFEDMYKVKFPEDALKNLASLSDVCTINYISGNTQKAILYAKLPLPTDKILKDEGQAQGDFDIKSMIEQEYLQIEKNMAESADEFLEDITVPPLVIPTEASPSVLVVELSNTNDVVIRYVGKDYSAAQELMEDEMKEFYSKNPRVTPIQTVHVGQLLAVNAEEDAWLRAQIISTDENKIKVCYVDYGFCENIEKSKAYRLNPRFCSLSFQATKCKLAGLEVLNDDPDLVKAVESLTCGKIFAVEILDKSDVPLVVLYDTSGEDDININATCLKAICDRSLQVHLQVDAMYTNVKVTNICSDGTLYCQVPCKGLNKLNDLLHKTEDYFHCKHMTSEYFISLPFCGKICLFHCKGKWLRVEITNVHSSRALDVQFLDSGNSTSVKVSELREIPPRFLQEMLAIPPQAIKCCLADLPQSIGMWTPDAVLWLRDSVLNCSDCSIKVTKMDETKGVAYVYLFTPNNFPDPHRSINRQITNADLWKHQKDVFLSAVSTAASSPGNRNGGTPAPGSPAESLRKSHPEVIKKSVLDHTSSFSLEELPPPVHLSRSGEHMDVYVPVACHPGHFVIQPWQEIHKLEVLMEEMILYYSVSEERHIAVERDQVYAAKVENKWYRVLLKGILTNGLVSVYELDYGKHELVNIRKVQPLVDVFRKLPFQAVTAQLAGVKCSQWSEEASMVFRNHVEKKALVALVQTVVEHTNPWDRKVVLYLVDTSLPDTDTWIHDFMSQYLLELSKVN.

HTH OST-type domains follow at residues 3–76 (EADL…YAVA) and 222–291 (KMDE…YPAR). A compositionally biased stretch (basic and acidic residues) spans 295–306 (PLKSDQDPEKEL). The interval 295–324 (PLKSDQDPEKELPPPPPAPKQEVPSQGSPA) is disordered. The region spanning 325–394 (VMPDVKEKVA…TQKAILYAKL (70 aa)) is the HTH OST-type 3 domain. 2 consecutive Tudor domains span residues 501 to 558 (TVHV…FCSL) and 691 to 748 (LPFC…FLQE). Residues 844–866 (AASSPGNRNGGTPAPGSPAESLR) are disordered. S847 carries the post-translational modification Phosphoserine. Residues 849–1086 (GNRNGGTPAP…QYLLELSKVN (238 aa)) form an interaction with CDK17 region. The segment at 881 to 1086 (TSSFSLEELP…QYLLELSKVN (206 aa)) is interaction with CABLES1.

The protein belongs to the TDRD7 family. As to quaternary structure, found in a mRNP complex, at least composed of TDRD1, TDRD6, TDRD7 and DDX4. Found in a complex containing CABLES1, CDK16 and CDK17. Interacts with CABLES1, CDK17 and PIWIL1. In terms of tissue distribution, mainly expressed in testis. Expressed in spermatogonia, spermatocytes and round spermatids (at protein level). Also expressed in the developing lens.

The protein localises to the cytoplasm. Its function is as follows. Component of specific cytoplasmic RNA granules involved in post-transcriptional regulation of specific genes: probably acts by binding to specific mRNAs and regulating their translation. Required for lens transparency during lens development, by regulating translation of genes such as CRYBB3 and HSPB1 in the developing lens. Also required during spermatogenesis. This is Tudor domain-containing protein 7 (Tdrd7) from Mus musculus (Mouse).